The chain runs to 207 residues: Large ribosomal subunit protein uL4 (207 aa).

Positions 48 to 87 (THAVKNRSAVSGGGKKPWRQKGTGRARQGSIRSPQFRGGG) are disordered.

The protein belongs to the universal ribosomal protein uL4 family. As to quaternary structure, part of the 50S ribosomal subunit.

Functionally, one of the primary rRNA binding proteins, this protein initially binds near the 5'-end of the 23S rRNA. It is important during the early stages of 50S assembly. It makes multiple contacts with different domains of the 23S rRNA in the assembled 50S subunit and ribosome. Its function is as follows. Forms part of the polypeptide exit tunnel. This is Large ribosomal subunit protein uL4 from Limosilactobacillus reuteri subsp. reuteri (strain JCM 1112) (Lactobacillus reuteri).